Consider the following 516-residue polypeptide: GMP synthase [glutamine-hydrolyzing] (516 aa).

The Glutamine amidotransferase type-1 domain maps to 8–198; it reads KILILDFGSQ…VVNICGCDTL (191 aa). Cys84 serves as the catalytic Nucleophile. Active-site residues include His172 and Glu174. Positions 199–391 constitute a GMPS ATP-PPase domain; it reads WNIENIIEND…LGLPYNMLYR (193 aa). 226–232 is an ATP binding site; it reads SGGVDSS.

Homodimer.

It carries out the reaction XMP + L-glutamine + ATP + H2O = GMP + L-glutamate + AMP + diphosphate + 2 H(+). It participates in purine metabolism; GMP biosynthesis; GMP from XMP (L-Gln route): step 1/1. Its function is as follows. Catalyzes the synthesis of GMP from XMP. This is GMP synthase [glutamine-hydrolyzing] from Francisella tularensis subsp. holarctica (strain LVS).